The chain runs to 567 residues: Septation ring formation regulator EzrA (567 aa).

Topologically, residues 1–2 (MG) are extracellular. The chain crosses the membrane as a helical span at residues 3–21 (MAWIVLLLGAGAIIYNHVY). At 22-567 (RKRMYREIDR…LWQEDNSREQ (546 aa)) the chain is on the cytoplasmic side. Coiled-coil stretches lie at residues 98–159 (YRQA…AYRY) and 251–497 (HMER…IEQA).

Belongs to the EzrA family.

Its subcellular location is the cell membrane. In terms of biological role, negative regulator of FtsZ ring formation; modulates the frequency and position of FtsZ ring formation. Inhibits FtsZ ring formation at polar sites. Interacts either with FtsZ or with one of its binding partners to promote depolymerization. The protein is Septation ring formation regulator EzrA of Geobacillus kaustophilus (strain HTA426).